The primary structure comprises 570 residues: Urease subunit alpha (570 aa).

Residues 131 to 570 (GGMDSHIHFI…LPMAQRYFLF (440 aa)) enclose the Urease domain. Positions 136, 138, and 219 each coordinate Ni(2+). Lys-219 bears the N6-carboxylysine mark. Substrate is bound at residue His-221. Positions 248 and 274 each coordinate Ni(2+). Catalysis depends on His-322, which acts as the Proton donor. Asp-362 provides a ligand contact to Ni(2+).

The protein belongs to the metallo-dependent hydrolases superfamily. Urease alpha subunit family. As to quaternary structure, heterotrimer of UreA (gamma), UreB (beta) and UreC (alpha) subunits. Three heterotrimers associate to form the active enzyme. The cofactor is Ni cation. In terms of processing, carboxylation allows a single lysine to coordinate two nickel ions.

Its subcellular location is the cytoplasm. It catalyses the reaction urea + 2 H2O + H(+) = hydrogencarbonate + 2 NH4(+). It participates in nitrogen metabolism; urea degradation; CO(2) and NH(3) from urea (urease route): step 1/1. The chain is Urease subunit alpha from Rhizobium johnstonii (strain DSM 114642 / LMG 32736 / 3841) (Rhizobium leguminosarum bv. viciae).